We begin with the raw amino-acid sequence, 239 residues long: Exosome complex component Rrp41 (239 aa).

A disordered region spans residues 1 to 21; that stretch reads MEERPERLISEDGLRLDGRKP.

The protein belongs to the RNase PH family. Rrp41 subfamily. As to quaternary structure, component of the archaeal exosome complex. Forms a hexameric ring-like arrangement composed of 3 Rrp41-Rrp42 heterodimers. The hexameric ring associates with a trimer of Rrp4 and/or Csl4 subunits.

It localises to the cytoplasm. In terms of biological role, catalytic component of the exosome, which is a complex involved in RNA degradation. Has 3'-&gt;5' exoribonuclease activity. Can also synthesize heteromeric RNA-tails. The protein is Exosome complex component Rrp41 of Methanopyrus kandleri (strain AV19 / DSM 6324 / JCM 9639 / NBRC 100938).